Consider the following 178-residue polypeptide: Probable DNA-directed RNA polymerase subunit delta (178 aa).

The HTH HARE-type domain maps to 14-81; that stretch reads LSLIDVAHFI…GNNTWGLRAW (68 aa). 2 disordered regions span residues 89–122 and 141–178; these read EEVQTQTTPKKKRKSDDDDDEDEEILDDDVDYDD and LDEDEDDDDHLPDGIEGDLATVEDDYTDGDYTEDPEDK. 3 stretches are compositionally biased toward acidic residues: residues 105–122, 141–150, and 161–178; these read DDDDEDEEILDDDVDYDD, LDEDEDDDDH, and TVEDDYTDGDYTEDPEDK.

Belongs to the RpoE family. In terms of assembly, RNAP is composed of a core of 2 alpha, a beta and a beta' subunits. The core is associated with a delta subunit and one of several sigma factors.

Functionally, participates in both the initiation and recycling phases of transcription. In the presence of the delta subunit, RNAP displays an increased specificity of transcription, a decreased affinity for nucleic acids, and an increased efficiency of RNA synthesis because of enhanced recycling. This Listeria innocua serovar 6a (strain ATCC BAA-680 / CLIP 11262) protein is Probable DNA-directed RNA polymerase subunit delta.